The sequence spans 122 residues: Small ribosomal subunit protein uS13 (122 aa).

The segment at 99 to 122 is disordered; it reads RGQRTHTNARTRKGPAKAIAGKKK.

Belongs to the universal ribosomal protein uS13 family. As to quaternary structure, part of the 30S ribosomal subunit. Forms a loose heterodimer with protein S19. Forms two bridges to the 50S subunit in the 70S ribosome.

Located at the top of the head of the 30S subunit, it contacts several helices of the 16S rRNA. In the 70S ribosome it contacts the 23S rRNA (bridge B1a) and protein L5 of the 50S subunit (bridge B1b), connecting the 2 subunits; these bridges are implicated in subunit movement. Contacts the tRNAs in the A and P-sites. The sequence is that of Small ribosomal subunit protein uS13 from Rhizobium leguminosarum bv. trifolii (strain WSM2304).